Consider the following 453-residue polypeptide: Gamma-aminobutyric acid receptor subunit alpha-6 (453 aa).

A signal peptide spans 1 to 19; it reads MVLLLPWLFIILWLENAQA. The Extracellular segment spans residues 20-243; sequence QLEDEGNFYS…FHLQRKMGYF (224 aa). An N-linked (GlcNAc...) asparagine glycan is attached at N31. R84 is a 4-aminobutanoate binding site. N128 and N141 each carry an N-linked (GlcNAc...) asparagine glycan. 4-aminobutanoate is bound at residue T147. An intrachain disulfide couples C156 to C170. A helical transmembrane segment spans residues 244-264; sequence MIQIYTPCIMTVILSQVSFWI. Residues 265–270 lie on the Cytoplasmic side of the membrane; it reads NKESVP. A helical transmembrane segment spans residues 271 to 290; sequence ARTVFGITTVLTMTTLSISA. Residues 291-304 are Extracellular-facing; sequence RHSLPKVSYATAMD. A helical membrane pass occupies residues 305 to 325; it reads WFIAVCFAFVFSALIEFAAVN. Residues 326–422 lie on the Cytoplasmic side of the membrane; that stretch reads YFTNLQSQKA…GTSKIDQYSR (97 aa). S375 carries the post-translational modification Phosphoserine. The chain crosses the membrane as a helical span at residues 423–443; that stretch reads ILFPVAFAGFNLVYWIVYLSK. Topologically, residues 444-453 are extracellular; sequence DTMEVSSTVE.

The protein belongs to the ligand-gated ion channel (TC 1.A.9) family. Gamma-aminobutyric acid receptor (TC 1.A.9.5) subfamily. GABRA6 sub-subfamily. In terms of assembly, heteropentamer, formed by a combination of alpha (GABRA1-6), beta (GABRB1-3), gamma (GABRG1-3), delta (GABRD), epsilon (GABRE), rho (GABRR1-3), pi (GABRP) and theta (GABRQ) chains, each subunit exhibiting distinct physiological and pharmacological properties. Binds UBQLN1. In terms of tissue distribution, expressed in brain, in cerebellar granule cells.

It is found in the postsynaptic cell membrane. The protein localises to the cell membrane. The enzyme catalyses chloride(in) = chloride(out). Alpha subunit of the heteropentameric ligand-gated chloride channel gated by gamma-aminobutyric acid (GABA), a major inhibitory neurotransmitter in the brain. GABA-gated chloride channels, also named GABA(A) receptors (GABAAR), consist of five subunits arranged around a central pore and contain GABA active binding site(s) located at the alpha and beta subunit interface(s). When activated by GABA, GABAARs selectively allow the flow of chloride anions across the cell membrane down their electrochemical gradient. Alpha-6/GABRA6 subunits are found at both synaptic and extrasynaptic sites. Chloride influx into the postsynaptic neuron following GABAAR opening decreases the neuron ability to generate a new action potential, thereby reducing nerve transmission. Extrasynaptic alpha-6-containing receptors contribute to the tonic GABAergic inhibition. Alpha-6 subunits are also present on glutamatergic synapses. This is Gamma-aminobutyric acid receptor subunit alpha-6 from Mus musculus (Mouse).